Reading from the N-terminus, the 162-residue chain is Allantoicase (162 aa).

It belongs to the allantoicase family. Homohexamer. In terms of tissue distribution, expressed in zygote.

It catalyses the reaction allantoate + H2O = (S)-ureidoglycolate + urea. It participates in nitrogen metabolism; (S)-allantoin degradation; (S)-ureidoglycolate from allantoate (aminidohydrolase route): step 1/1. Functionally, catalyzes the degradation of allantoate to (-)-ureidoglycolate and (+)-ureidoglycolate to glyoxylate. In Chlamydomonas reinhardtii (Chlamydomonas smithii), this protein is Allantoicase.